A 332-amino-acid chain; its full sequence is L-lactate dehydrogenase C chain (332 aa).

Ser2 bears the Blocked amino end (Ser) mark. NAD(+)-binding positions include 29–57 (GNVG…DENK) and Arg99. Residues Arg106, Asn138, and Arg169 each coordinate substrate. Asn138 serves as a coordination point for NAD(+). Catalysis depends on His193, which acts as the Proton acceptor. A substrate-binding site is contributed by Thr248.

This sequence belongs to the LDH/MDH superfamily. LDH family. In terms of assembly, homotetramer. Interacts with RABL2/RABL2A; binds preferentially to GTP-bound RABL2.

Its subcellular location is the cytoplasm. The enzyme catalyses (S)-lactate + NAD(+) = pyruvate + NADH + H(+). It participates in fermentation; pyruvate fermentation to lactate; (S)-lactate from pyruvate: step 1/1. In terms of biological role, possible role in sperm motility. This chain is L-lactate dehydrogenase C chain (Ldhc), found in Rattus norvegicus (Rat).